The chain runs to 141 residues: Nucleoside diphosphate kinase (141 aa).

ATP contacts are provided by K11, F59, R87, T93, R104, and N114. Catalysis depends on H117, which acts as the Pros-phosphohistidine intermediate.

It belongs to the NDK family. Homotetramer. Mg(2+) serves as cofactor.

It localises to the cytoplasm. The catalysed reaction is a 2'-deoxyribonucleoside 5'-diphosphate + ATP = a 2'-deoxyribonucleoside 5'-triphosphate + ADP. The enzyme catalyses a ribonucleoside 5'-diphosphate + ATP = a ribonucleoside 5'-triphosphate + ADP. Functionally, major role in the synthesis of nucleoside triphosphates other than ATP. The ATP gamma phosphate is transferred to the NDP beta phosphate via a ping-pong mechanism, using a phosphorylated active-site intermediate. In Burkholderia ambifaria (strain MC40-6), this protein is Nucleoside diphosphate kinase.